The primary structure comprises 491 residues: Nucleoside transporter 1.1 (491 aa).

Helical transmembrane passes span 27–47 (FYVYVVAFMCGVSMMMPVNAV), 82–102 (YNLIGIVTSLIMEPLTLLSWF), 109–129 (VRLLGGLVILIVEIIVLMVVP), 136–156 (AGAVATICCTGFIGGFGKSIF), 173–193 (STMMGGVGMSGVLTSLLQIIV), and 209–229 (KIYYGLDVGIQGMTFVALILL). Over residues 260–273 (CHTDEHPTHDKEGR) the composition is skewed to basic and acidic residues. Disordered stretches follow at residues 260-280 (CHTDEHPTHDKEGRNSSSGKE) and 290-309 (AAAKSEGPDAVEESSWPHEV). Asn274 is a glycosylation site (N-linked (GlcNAc...) asparagine). 5 helical membrane-spanning segments follow: residues 333 to 353 (MFVACAFNFLITLFLFPGIAV), 361 to 381 (WFSTIAVFIFNVFDVLGRFSP), 395 to 415 (WIIVAASFARVIFVPLLLLHS), 427 to 447 (VMEVIFGFSNGYVGSMALVLG), and 460 to 480 (FVAGTLMGISILVGGTIGTVL).

The protein belongs to the SLC29A/ENT transporter (TC 2.A.57) family.

The protein localises to the membrane. The catalysed reaction is adenosine(in) + H(+)(in) = adenosine(out) + H(+)(out). It catalyses the reaction uridine(in) + H(+)(in) = uridine(out) + H(+)(out). Functionally, sodium-independent high affinity nucleoside:H(+) symporter; transports adenosine and uridine. Can transport cytidine and thymidine. This Leishmania donovani protein is Nucleoside transporter 1.1.